Consider the following 377-residue polypeptide: tRNA-specific 2-thiouridylase MnmA (377 aa).

Residues 8-15 (GMSGGVDS) and methionine 34 contribute to the ATP site. The tract at residues 94-96 (NPD) is interaction with target base in tRNA. Cysteine 99 serves as the catalytic Nucleophile. The cysteines at positions 99 and 201 are disulfide-linked. Residue glycine 123 participates in ATP binding. Residues 151–153 (KDQ) are interaction with tRNA. Cysteine 201 functions as the Cysteine persulfide intermediate in the catalytic mechanism. An interaction with tRNA region spans residues 315 to 316 (RY).

The protein belongs to the MnmA/TRMU family.

The protein resides in the cytoplasm. The catalysed reaction is S-sulfanyl-L-cysteinyl-[protein] + uridine(34) in tRNA + AH2 + ATP = 2-thiouridine(34) in tRNA + L-cysteinyl-[protein] + A + AMP + diphosphate + H(+). Functionally, catalyzes the 2-thiolation of uridine at the wobble position (U34) of tRNA, leading to the formation of s(2)U34. This is tRNA-specific 2-thiouridylase MnmA from Acinetobacter baumannii (strain SDF).